The sequence spans 108 residues: Movement protein (108 aa).

The disordered stretch occupies residues 1–25 (MDASSQYSALPYPQPPRVPSAAPSA). Residues 35–55 (EIVIFTFVSVLALYLLWLWVL) form a helical membrane-spanning segment. Residues 73-108 (LIFGPGERPPVASADGSRPVPDPSPPVRRDLDLSRV) are disordered. Positions 99–108 (VRRDLDLSRV) are enriched in basic and acidic residues.

It belongs to the mastrevirus movement protein family. Interacts with the capsid protein (CP). Part of a MP-CP-viral DNA complex.

It localises to the host membrane. Involved in the viral transport within, and between cells. The sequence is that of Movement protein from Megathyrsus maximus (PanSV).